Here is a 167-residue protein sequence, read N- to C-terminus: Shikimate kinase (167 aa).

12 to 17 (GSGKTT) provides a ligand contact to ATP. T16 is a binding site for Mg(2+). Positions 34, 58, and 80 each coordinate substrate. R117 contacts ATP. Residue R135 coordinates substrate. ATP is bound at residue R152.

It belongs to the shikimate kinase family. In terms of assembly, monomer. The cofactor is Mg(2+).

It is found in the cytoplasm. The catalysed reaction is shikimate + ATP = 3-phosphoshikimate + ADP + H(+). It participates in metabolic intermediate biosynthesis; chorismate biosynthesis; chorismate from D-erythrose 4-phosphate and phosphoenolpyruvate: step 5/7. Functionally, catalyzes the specific phosphorylation of the 3-hydroxyl group of shikimic acid using ATP as a cosubstrate. The polypeptide is Shikimate kinase (Salinispora arenicola (strain CNS-205)).